The following is a 37-amino-acid chain: Large ribosomal subunit protein bL36 (37 aa).

This sequence belongs to the bacterial ribosomal protein bL36 family.

This Persephonella marina (strain DSM 14350 / EX-H1) protein is Large ribosomal subunit protein bL36.